A 394-amino-acid polypeptide reads, in one-letter code: Phosphopentomutase (394 aa).

Asp-15, Asp-288, His-293, Asp-329, His-330, and His-341 together coordinate Mn(2+).

It belongs to the phosphopentomutase family. Requires Mn(2+) as cofactor.

It localises to the cytoplasm. The enzyme catalyses 2-deoxy-alpha-D-ribose 1-phosphate = 2-deoxy-D-ribose 5-phosphate. It catalyses the reaction alpha-D-ribose 1-phosphate = D-ribose 5-phosphate. The protein operates within carbohydrate degradation; 2-deoxy-D-ribose 1-phosphate degradation; D-glyceraldehyde 3-phosphate and acetaldehyde from 2-deoxy-alpha-D-ribose 1-phosphate: step 1/2. Functionally, isomerase that catalyzes the conversion of deoxy-ribose 1-phosphate (dRib-1-P) and ribose 1-phosphate (Rib-1-P) to deoxy-ribose 5-phosphate (dRib-5-P) and ribose 5-phosphate (Rib-5-P), respectively. The chain is Phosphopentomutase from Bacillus licheniformis (strain ATCC 14580 / DSM 13 / JCM 2505 / CCUG 7422 / NBRC 12200 / NCIMB 9375 / NCTC 10341 / NRRL NRS-1264 / Gibson 46).